We begin with the raw amino-acid sequence, 867 residues long: MAATRYNPKETEPKWRKRWDEAQAFRAVEAPGKRKYYVLEMFPYPSGRLHMGHVRNYALGDVIARYKRAQDFSVLHPMGWDAFGLPAENAAMERGVDPKAWTYDNIARMRAELKELGLSIDWSREFATCDVEYYGQQQALFLELFERGLVYRKESVVNWDPVDQTVLANEQVVDGKGWRSGAPVEKRKLAQWFLKITQYADQLVDDLKTLDRWPEKVRVMQENWIGRSKGARLRFRFAGQPPAGHEAGVEVYTTRPDTLFGASFVGVAPDHPLAQAVAAANPEAAAFIEKCRHGAVSEAEIETAEKEGFDTGLKVKHPFDPSWELPVWIANFILMDYGTGAIFGCPAHDQRDLDFARKYGLPVKPVVLPPEEAQAEAIVQKLLNEAYTGPGRIINSGFLDGLDVEAAKAAAIARIEEQGDGQGATVYRLRDWGVSRQRAWGCPIPVVHCQACGVVPVRRSDLPLTHPADIEFGKAGNALERHPTWKHTTCPGCGGPATRETDTLDTFVDSSWYFARFANPGAEAPIDKAAADYWLPVDQYIGGVEHAVLHLLYARFITKALADVGMLSVREPFAGLFTQGMVTHETYRKQSGEWVEPKEVEVTAEGKTRRARLVGSGEPVVIGDVEKMSKSKKNTVAPEEIFDVYGVDAARLFVLSDSPPERDAQWSTSGVQGAWRFVNRVWDEFDASEEPVPGTEEAVTGVATDNLRRQHAKTVKAVTEAIEGFRFNSAIAHLYSFLNVLKAERPQGRAGALAHAHRAALRDFALLIAPFTPHLAEECWARIGGQGLVVEAPWPTYDPALTQDAVKVLPVQVNGKRRGEISAPAGAEPAEVEQLVLADPEIKARLEGLTIRKIIVVKDRIVNIVAA.

The short motif at 43 to 53 is the 'HIGH' region element; the sequence is PYPSGRLHMGH. The 'KMSKS' region signature appears at 627–631; sequence KMSKS. An ATP-binding site is contributed by K630.

This sequence belongs to the class-I aminoacyl-tRNA synthetase family.

It localises to the cytoplasm. It catalyses the reaction tRNA(Leu) + L-leucine + ATP = L-leucyl-tRNA(Leu) + AMP + diphosphate. The chain is Leucine--tRNA ligase from Phenylobacterium zucineum (strain HLK1).